A 961-amino-acid chain; its full sequence is Aconitate hydratase A (961 aa).

Residues C499, C565, and C568 each contribute to the [4Fe-4S] cluster site.

It belongs to the aconitase/IPM isomerase family. In terms of assembly, monomer. [4Fe-4S] cluster is required as a cofactor.

The enzyme catalyses citrate = D-threo-isocitrate. The catalysed reaction is (2S,3R)-3-hydroxybutane-1,2,3-tricarboxylate = 2-methyl-cis-aconitate + H2O. The protein operates within carbohydrate metabolism; tricarboxylic acid cycle; isocitrate from oxaloacetate: step 2/2. It functions in the pathway organic acid metabolism; propanoate degradation. In terms of biological role, involved in the catabolism of short chain fatty acids (SCFA) via the tricarboxylic acid (TCA)(acetyl degradation route) and probably via the 2-methylcitrate cycle I (propionate degradation route). Catalyzes the reversible isomerization of citrate to isocitrate via cis-aconitate. The apo form of AcnA functions as a RNA-binding regulatory protein. Could catalyze the hydration of 2-methyl-cis-aconitate to yield (2R,3S)-2-methylisocitrate. The polypeptide is Aconitate hydratase A (acn) (Mycobacterium avium).